A 225-amino-acid chain; its full sequence is Suppressor of cytokine signaling 3 (225 aa).

A kinase inhibitory region (KIR) region spans residues 22-33 (LKTFSSKSEYQL). The tract at residues 34–45 (VVNAVRKLQESG) is extended SH2 subdomain (ESS). Residues 46-142 (FYWSAVTGGE…APSFPSPPTE (97 aa)) form the SH2 domain. The segment covering 131–142 (PGAPSFPSPPTE) has biased composition (pro residues). Residues 131–162 (PGAPSFPSPPTEPSSEVPEQPSAQPLPGSPPR) form a disordered region. The span at 143-155 (PSSEVPEQPSAQP) shows a compositional bias: low complexity. Residues 177-224 (VLSRPLSSNVATLQHLCRKTVNGHLDSYEKVTQLPGPIREFLDQYDAP) form the SOCS box domain.

Interacts with multiple activated proteins of the tyrosine kinase signaling pathway including IGF1 receptor, insulin receptor and JAK2. Binding to JAK2 is mediated through the KIR and SH2 domains to a phosphorylated tyrosine residue within the JAK2 JH1 domain. Binds specific activated tyrosine residues of the leptin, EPO, IL12, GSCF and gp130 receptors. Interaction with CSNK1E stabilizes SOCS3 protein. Component of the probable ECS(SOCS3) E3 ubiquitin-protein ligase complex which contains CUL5, RNF7/RBX2, Elongin BC complex and SOCS3. Interacts with CUL5, RNF7, ELOB and ELOC. Interacts with CUL2. Interacts with FGFR3. Interacts with INSR. Interacts with BCL10; this interaction may interfere with BCL10-binding with PELI2. Interacts with NOD2 (via CARD domain); the interaction promotes NOD2 degradation. Post-translationally, phosphorylated on tyrosine residues after stimulation by the cytokines, IL-2, EPO or IGF1. As to expression, widely expressed with high expression in heart, placenta, skeletal muscle, peripheral blood leukocytes, fetal and adult lung, and fetal liver and kidney. Lower levels in thymus.

It participates in protein modification; protein ubiquitination. SOCS family proteins form part of a classical negative feedback system that regulates cytokine signal transduction. SOCS3 is involved in negative regulation of cytokines that signal through the JAK/STAT pathway. Inhibits cytokine signal transduction by binding to tyrosine kinase receptors including IL6ST/gp130, LIF, erythropoietin, insulin, IL12, GCSF and leptin receptors. Binding to JAK2 inhibits its kinase activity and regulates IL6 signaling. Suppresses fetal liver erythropoiesis. Regulates onset and maintenance of allergic responses mediated by T-helper type 2 cells. Probable substrate recognition component of a SCF-like ECS (Elongin BC-CUL2/5-SOCS-box protein) E3 ubiquitin-protein ligase complex which mediates the ubiquitination and subsequent proteasomal degradation of target proteins. This is Suppressor of cytokine signaling 3 from Homo sapiens (Human).